The following is a 700-amino-acid chain: Beta-galactosidase BgaB (700 aa).

2 residues coordinate substrate: Arg122 and Asn160. Glu161 functions as the Proton donor in the catalytic mechanism. Glu320 acts as the Nucleophile in catalysis. Residues Trp328 and 368–371 (EAFH) each bind substrate.

Belongs to the glycosyl hydrolase 42 family. In terms of assembly, trimer. Tetramer. In terms of processing, the N-terminus is blocked.

The enzyme catalyses Hydrolysis of terminal non-reducing beta-D-galactose residues in beta-D-galactosides.. Inhibited by high substrate concentrations (100 mg/ml). No effect on activity with various EDTA concentrations (0-1 mM). 20-fold higher activity when cells grown on TOS than when cells grown on galactose, glucose and lactose. Its function is as follows. Involved in the hydrolysis of transgalactooligosaccharides (TOS). Highly active towards Gal(beta1-4)Gal and Gal(beta1-4)-Gal-containing oligosaccharides. Low activity towards Gal(beta1-3)Gal, lactose and Gal(beta1-3)GalOMe. No activity towards Gal(beta1-6)Gal, Gal(beta1-4)Man, Gal(alpha1-4)Gal, Gal(alpha1-3)Gal(beta1-4)Gal, lactulose, 3'fucosyllactose, lacto-N-fucopentaose I, lacto-N-fucopentaose II, cellobiose, maltose or sucrose. No transglycosylation activity is found at high substrate concentrations (100 mg/ml) and only low transglycosylation activity at lower substrate concentrations (10 mg/ml). This is Beta-galactosidase BgaB (bgaB) from Bifidobacterium adolescentis (strain ATCC 15703 / DSM 20083 / NCTC 11814 / E194a).